Here is a 142-residue protein sequence, read N- to C-terminus: Small heat shock protein IbpB (142 aa).

The 112-residue stretch at 26 to 137 (TGESQSFPPY…APQRIAISER (112 aa)) folds into the sHSP domain.

This sequence belongs to the small heat shock protein (HSP20) family. In terms of assembly, homodimer. Forms homomultimers of about 100-150 subunits at optimal growth temperatures. Conformation changes to oligomers at high temperatures or high ionic concentrations. The decrease in size of the multimers is accompanied by an increase in chaperone activity.

It is found in the cytoplasm. Functionally, associates with aggregated proteins, together with IbpA, to stabilize and protect them from irreversible denaturation and extensive proteolysis during heat shock and oxidative stress. Aggregated proteins bound to the IbpAB complex are more efficiently refolded and reactivated by the ATP-dependent chaperone systems ClpB and DnaK/DnaJ/GrpE. Its activity is ATP-independent. The chain is Small heat shock protein IbpB from Citrobacter koseri (strain ATCC BAA-895 / CDC 4225-83 / SGSC4696).